We begin with the raw amino-acid sequence, 466 residues long: Soluble pyridine nucleotide transhydrogenase (466 aa).

36-45 lines the FAD pocket; it reads ERYHQVGGGC.

The protein belongs to the class-I pyridine nucleotide-disulfide oxidoreductase family. Requires FAD as cofactor.

The protein localises to the cytoplasm. It catalyses the reaction NAD(+) + NADPH = NADH + NADP(+). Conversion of NADPH, generated by peripheral catabolic pathways, to NADH, which can enter the respiratory chain for energy generation. This Colwellia psychrerythraea (strain 34H / ATCC BAA-681) (Vibrio psychroerythus) protein is Soluble pyridine nucleotide transhydrogenase.